Reading from the N-terminus, the 154-residue chain is Small ribosomal subunit protein eS10 (154 aa).

The segment at Ala-91–Asn-154 is disordered. Residues Arg-124–Gly-135 show a composition bias toward basic and acidic residues.

It belongs to the eukaryotic ribosomal protein eS10 family.

The protein resides in the cytoplasm. The protein is Small ribosomal subunit protein eS10 (rps10) of Dictyostelium discoideum (Social amoeba).